The sequence spans 108 residues: FK506-binding protein 1 (108 aa).

A PPIase FKBP-type domain is found at 20 to 108 (GDSVTIHYVG…KFEVELLKIN (89 aa)).

The protein belongs to the FKBP-type PPIase family. FKBP1 subfamily.

It is found in the cytoplasm. The catalysed reaction is [protein]-peptidylproline (omega=180) = [protein]-peptidylproline (omega=0). Inhibited by both FK506 and rapamycin. PPIases accelerate the folding of proteins. It catalyzes the cis-trans isomerization of proline imidic peptide bonds in oligopeptides. In Cryptococcus neoformans var. neoformans serotype D (strain JEC21 / ATCC MYA-565) (Filobasidiella neoformans), this protein is FK506-binding protein 1 (FPR1).